The following is a 620-amino-acid chain: Threonine--tRNA ligase (620 aa).

The 42-residue stretch at 1 to 42 (MFEIAKGISNSLAKKSVGAKVDGKNVDMSYILDHDAEVEFID) folds into the TGS domain. Residues 224–515 (DHRKLGKELE…LIEHYAGAFP (292 aa)) are catalytic. Cys315, His366, and His492 together coordinate Zn(2+).

Belongs to the class-II aminoacyl-tRNA synthetase family. As to quaternary structure, homodimer. The cofactor is Zn(2+).

Its subcellular location is the cytoplasm. The catalysed reaction is tRNA(Thr) + L-threonine + ATP = L-threonyl-tRNA(Thr) + AMP + diphosphate + H(+). Functionally, catalyzes the attachment of threonine to tRNA(Thr) in a two-step reaction: L-threonine is first activated by ATP to form Thr-AMP and then transferred to the acceptor end of tRNA(Thr). Also edits incorrectly charged L-seryl-tRNA(Thr). This Fusobacterium nucleatum subsp. nucleatum (strain ATCC 25586 / DSM 15643 / BCRC 10681 / CIP 101130 / JCM 8532 / KCTC 2640 / LMG 13131 / VPI 4355) protein is Threonine--tRNA ligase.